Here is a 496-residue protein sequence, read N- to C-terminus: Glycerol kinase (496 aa).

An ADP-binding site is contributed by Thr-12. ATP-binding residues include Thr-12, Thr-13, and Ser-14. Thr-12 is a binding site for sn-glycerol 3-phosphate. Arg-16 is an ADP binding site. The sn-glycerol 3-phosphate site is built by Arg-82, Glu-83, and Tyr-134. Positions 82, 83, and 134 each coordinate glycerol. The residue at position 230 (His-230) is a Phosphohistidine; by HPr. Asp-244 provides a ligand contact to sn-glycerol 3-phosphate. Glycerol-binding residues include Asp-244 and Gln-245. ADP is bound by residues Thr-266 and Gly-309. Positions 266, 309, 313, and 410 each coordinate ATP. ADP-binding residues include Gly-410 and Asn-414.

Belongs to the FGGY kinase family. As to quaternary structure, homotetramer and homodimer (in equilibrium). The phosphoenolpyruvate-dependent sugar phosphotransferase system (PTS), including enzyme I, and histidine-containing protein (HPr) are required for the phosphorylation, which leads to the activation of the enzyme.

It catalyses the reaction glycerol + ATP = sn-glycerol 3-phosphate + ADP + H(+). Its pathway is polyol metabolism; glycerol degradation via glycerol kinase pathway; sn-glycerol 3-phosphate from glycerol: step 1/1. Its activity is regulated as follows. Activated by phosphorylation and inhibited by fructose 1,6-bisphosphate (FBP). Functionally, key enzyme in the regulation of glycerol uptake and metabolism. Catalyzes the phosphorylation of glycerol to yield sn-glycerol 3-phosphate. The sequence is that of Glycerol kinase from Bacillus cereus (strain G9842).